The primary structure comprises 472 residues: Methylenetetrahydrofolate--tRNA-(uracil-5-)-methyltransferase TrmFO (472 aa).

An FAD-binding site is contributed by 10-15 (GGGLAG).

The protein belongs to the MnmG family. TrmFO subfamily. FAD serves as cofactor.

The protein resides in the cytoplasm. The enzyme catalyses uridine(54) in tRNA + (6R)-5,10-methylene-5,6,7,8-tetrahydrofolate + NADH + H(+) = 5-methyluridine(54) in tRNA + (6S)-5,6,7,8-tetrahydrofolate + NAD(+). The catalysed reaction is uridine(54) in tRNA + (6R)-5,10-methylene-5,6,7,8-tetrahydrofolate + NADPH + H(+) = 5-methyluridine(54) in tRNA + (6S)-5,6,7,8-tetrahydrofolate + NADP(+). In terms of biological role, catalyzes the folate-dependent formation of 5-methyl-uridine at position 54 (M-5-U54) in all tRNAs. This is Methylenetetrahydrofolate--tRNA-(uracil-5-)-methyltransferase TrmFO from Mesorhizobium japonicum (strain LMG 29417 / CECT 9101 / MAFF 303099) (Mesorhizobium loti (strain MAFF 303099)).